The chain runs to 267 residues: 26S proteasome non-ATPase regulatory subunit 8 homolog A (267 aa).

Methionine 1 is modified (N-acetylmethionine). A PCI domain is found at 79–251; the sequence is DAFERDFFQL…APCKEIPSLQ (173 aa).

It belongs to the proteasome subunit S14 family. In terms of assembly, component of the 19S regulatory particle (RP/PA700) lid subcomplex of the 26S proteasome. The 26S proteasome is composed of a core protease (CP), known as the 20S proteasome, capped at one or both ends by the 19S regulatory particle (RP/PA700). The RP/PA700 complex is composed of at least 17 different subunits in two subcomplexes, the base and the lid, which form the portions proximal and distal to the 20S proteolytic core, respectively. Interacts with PUB22 and PUB23. Binds to the translation initiation factors TIF3E1. Interacts with UCH1 and UCH2. In terms of processing, ubiquitinated by PUB22 and PUB23. As to expression, ubiquitous with highest expression in flowers.

Acts as a regulatory subunit of the 26S proteasome which is involved in the ATP-dependent degradation of ubiquitinated proteins. May help to control the degradation of one or more factors that repress cytokinin signaling. Plays an important role for balancing cell expansion with cell proliferation rates during shoot development. This chain is 26S proteasome non-ATPase regulatory subunit 8 homolog A, found in Arabidopsis thaliana (Mouse-ear cress).